The chain runs to 77 residues: uncharacterized protein (77 aa).

2 4Fe-4S ferredoxin-type domains span residues 3-32 (VEII…WTKD) and 36-65 (KYYA…IKVV). [4Fe-4S] cluster contacts are provided by cysteine 12, cysteine 15, cysteine 18, cysteine 22, cysteine 45, cysteine 48, cysteine 51, and cysteine 55.

Requires [4Fe-4S] cluster as cofactor.

Its function is as follows. Ferredoxins are iron-sulfur proteins that transfer electrons probably in the CO-dehydrogenase complex. This is an uncharacterized protein from Methanocaldococcus jannaschii (strain ATCC 43067 / DSM 2661 / JAL-1 / JCM 10045 / NBRC 100440) (Methanococcus jannaschii).